Here is a 90-residue protein sequence, read N- to C-terminus: Probable Fe(2+)-trafficking protein (90 aa).

It belongs to the Fe(2+)-trafficking protein family.

Functionally, could be a mediator in iron transactions between iron acquisition and iron-requiring processes, such as synthesis and/or repair of Fe-S clusters in biosynthetic enzymes. The chain is Probable Fe(2+)-trafficking protein from Halorhodospira halophila (strain DSM 244 / SL1) (Ectothiorhodospira halophila (strain DSM 244 / SL1)).